The following is a 417-amino-acid chain: Cotranscriptional regulator ARB2A (417 aa).

An N-terminal signal peptide occupies residues 1–18 (MSISLSSLIFLPIWINMA). N-linked (GlcNAc...) asparagine glycosylation occurs at N26. The segment at 208–248 (KQKMHKQSSSSDGTDEPAGKRERRDKVSKETKKRRDFYEKY) is disordered. The span at 224–237 (PAGKRERRDKVSKE) shows a compositional bias: basic and acidic residues. S294 acts as the Nucleophile in catalysis. Residues 398–417 (SSSQKPALTRRSHRIKHEEL) are disordered. Residues 405–417 (LTRRSHRIKHEEL) are compositionally biased toward basic residues. The Prevents secretion from ER signature appears at 414–417 (HEEL).

This sequence belongs to the ARB2A family. As to quaternary structure, interacts with AGO2. Found in a complex, composed of AGO2, CHD7 and ARB2A.

The protein localises to the nucleus. Its subcellular location is the cytoplasm. It is found in the endoplasmic reticulum. Its function is as follows. Plays a role in the regulation of alternative splicing, by interacting with AGO2 and CHD7. Seems to be required for stabilizing protein-protein interactions at the chromatin-spliceosome interface. May have hydrolase activity. The polypeptide is Cotranscriptional regulator ARB2A (Arb2a) (Mus musculus (Mouse)).